We begin with the raw amino-acid sequence, 190 residues long: Fe/S biogenesis protein NfuA (190 aa).

2 residues coordinate [4Fe-4S] cluster: C148 and C151.

This sequence belongs to the NfuA family. As to quaternary structure, homodimer. [4Fe-4S] cluster serves as cofactor.

Involved in iron-sulfur cluster biogenesis. Binds a 4Fe-4S cluster, can transfer this cluster to apoproteins, and thereby intervenes in the maturation of Fe/S proteins. Could also act as a scaffold/chaperone for damaged Fe/S proteins. The chain is Fe/S biogenesis protein NfuA from Baumannia cicadellinicola subsp. Homalodisca coagulata.